Reading from the N-terminus, the 167-residue chain is Transcription antitermination protein NusB (167 aa).

The disordered stretch occupies residues 1 to 32 (MSDTPETGKPAAGTKPAARTEAKAPPKSARRR).

This sequence belongs to the NusB family.

Functionally, involved in transcription antitermination. Required for transcription of ribosomal RNA (rRNA) genes. Binds specifically to the boxA antiterminator sequence of the ribosomal RNA (rrn) operons. This Cupriavidus pinatubonensis (strain JMP 134 / LMG 1197) (Cupriavidus necator (strain JMP 134)) protein is Transcription antitermination protein NusB.